A 165-amino-acid polypeptide reads, in one-letter code: 3-isopropylmalate dehydratase small subunit (165 aa).

The protein belongs to the LeuD family. LeuD type 2 subfamily. As to quaternary structure, heterodimer of LeuC and LeuD.

The enzyme catalyses (2R,3S)-3-isopropylmalate = (2S)-2-isopropylmalate. Its pathway is amino-acid biosynthesis; L-leucine biosynthesis; L-leucine from 3-methyl-2-oxobutanoate: step 2/4. Functionally, catalyzes the isomerization between 2-isopropylmalate and 3-isopropylmalate, via the formation of 2-isopropylmaleate. The polypeptide is 3-isopropylmalate dehydratase small subunit (Desulfovibrio desulfuricans (strain ATCC 27774 / DSM 6949 / MB)).